The sequence spans 262 residues: MKKLSLALVGAGGIGTTVLREIREGRLEGKVEPVLVCDRHPEKLKRIERWFPDCDTSTDLDDAMSAEADVLLEAASVEAAASLLPDALKRFDVIVMSVGALVLEEGLLSRCREVAEVTGHRLHVPSGAVGGLDVLRALRGRVREVTLTTIKPPKALNKDVSERTVLYEGSVRDAVRKFPKNINVAAAVSLAVGDPSLVTVRIVCDPEVSVNTHVIEVESSAGTYRFELRNEALPDNPKTSAVAAYSAVALIERMTEGIRVGT.

NAD(+)-binding residues include A128 and N183. The active site involves H213.

The protein belongs to the L-aspartate dehydrogenase family.

The enzyme catalyses L-aspartate + NADP(+) + H2O = oxaloacetate + NH4(+) + NADPH + H(+). It catalyses the reaction L-aspartate + NAD(+) + H2O = oxaloacetate + NH4(+) + NADH + H(+). Its pathway is cofactor biosynthesis; NAD(+) biosynthesis; iminoaspartate from L-aspartate (dehydrogenase route): step 1/1. Specifically catalyzes the NAD or NADP-dependent dehydrogenation of L-aspartate to iminoaspartate. The chain is L-aspartate dehydrogenase from Methanopyrus kandleri (strain AV19 / DSM 6324 / JCM 9639 / NBRC 100938).